Consider the following 358-residue polypeptide: HTH-type transcriptional regulator IpsA (358 aa).

The HTH lacI-type domain maps to glycine 8 to threonine 63. Positions leucine 10 to asparagine 29 form a DNA-binding region, H-T-H motif.

As to quaternary structure, homodimer.

Myo-inositol causes the dissociation of the IpsA-DNA complex in vitro. Functionally, plays a role in the regulation of cell wall biogenesis. Inositol-dependent transcriptional activator of ino1, which encodes inositol phosphate synthase. Also regulates other target genes, which are most likely involved in the synthesis of inositol-derived cell wall components and mycothiol. Acts by binding to a conserved palindromic motif within the promoter regions. The sequence is that of HTH-type transcriptional regulator IpsA from Corynebacterium glutamicum (strain ATCC 13032 / DSM 20300 / JCM 1318 / BCRC 11384 / CCUG 27702 / LMG 3730 / NBRC 12168 / NCIMB 10025 / NRRL B-2784 / 534).